Reading from the N-terminus, the 390-residue chain is 4-hydroxy-3-methylbut-2-en-1-yl diphosphate synthase (flavodoxin) (390 aa).

Positions 281, 284, 316, and 323 each coordinate [4Fe-4S] cluster.

It belongs to the IspG family. It depends on [4Fe-4S] cluster as a cofactor.

It catalyses the reaction (2E)-4-hydroxy-3-methylbut-2-enyl diphosphate + oxidized [flavodoxin] + H2O + 2 H(+) = 2-C-methyl-D-erythritol 2,4-cyclic diphosphate + reduced [flavodoxin]. It participates in isoprenoid biosynthesis; isopentenyl diphosphate biosynthesis via DXP pathway; isopentenyl diphosphate from 1-deoxy-D-xylulose 5-phosphate: step 5/6. Converts 2C-methyl-D-erythritol 2,4-cyclodiphosphate (ME-2,4cPP) into 1-hydroxy-2-methyl-2-(E)-butenyl 4-diphosphate. The polypeptide is 4-hydroxy-3-methylbut-2-en-1-yl diphosphate synthase (flavodoxin) (Salinispora arenicola (strain CNS-205)).